The sequence spans 110 residues: uncharacterized protein (110 aa).

Residues 1–72 (MWRSSNQRGV…NHRNIHLRNP (72 aa)) are disordered. Basic residues predominate over residues 10-23 (VSRRRDKSMRKYTR). Over residues 48-57 (KNTYTGNISS) the composition is skewed to polar residues.

This is an uncharacterized protein from Human herpesvirus 6A (strain Uganda-1102) (HHV-6 variant A).